A 302-amino-acid chain; its full sequence is Quinolinate synthase (302 aa).

2 residues coordinate iminosuccinate: H24 and S41. C86 serves as a coordination point for [4Fe-4S] cluster. Iminosuccinate-binding positions include 112-114 (YVN) and S129. C173 contacts [4Fe-4S] cluster. Residues 199-201 (HPE) and T216 contribute to the iminosuccinate site. C259 is a [4Fe-4S] cluster binding site.

It belongs to the quinolinate synthase family. Type 2 subfamily. [4Fe-4S] cluster is required as a cofactor.

The protein resides in the cytoplasm. The enzyme catalyses iminosuccinate + dihydroxyacetone phosphate = quinolinate + phosphate + 2 H2O + H(+). It participates in cofactor biosynthesis; NAD(+) biosynthesis; quinolinate from iminoaspartate: step 1/1. In terms of biological role, catalyzes the condensation of iminoaspartate with dihydroxyacetone phosphate to form quinolinate. This chain is Quinolinate synthase, found in Thermococcus kodakarensis (strain ATCC BAA-918 / JCM 12380 / KOD1) (Pyrococcus kodakaraensis (strain KOD1)).